A 342-amino-acid polypeptide reads, in one-letter code: ATP synthase subunit a (342 aa).

Transmembrane regions (helical) follow at residues 11–31, 109–129, 170–190, 199–219, 238–258, 262–282, 287–307, and 308–328; these read GLIK…AFAS, HVVT…IIGS, YLPY…LGLV, NINV…IAAL, ALWI…PVAL, LFAN…ISFI, IVAV…EIFV, and AFLQ…LASA.

This sequence belongs to the ATPase A chain family. F-type ATPases have 2 components, CF(1) - the catalytic core - and CF(0) - the membrane proton channel. CF(1) has five subunits: alpha(3), beta(3), gamma(1), delta(1), epsilon(1). CF(0) has four main subunits: a, b, b' and c.

Its subcellular location is the cell inner membrane. Functionally, key component of the proton channel; it plays a direct role in the translocation of protons across the membrane. The protein is ATP synthase subunit a of Chlorobium phaeobacteroides (strain DSM 266 / SMG 266 / 2430).